A 646-amino-acid polypeptide reads, in one-letter code: Threonine--tRNA ligase (646 aa).

One can recognise a TGS domain in the interval 1 to 61 (MIKITFPDGS…NEDANFVLYK (61 aa)). Positions 242–541 (DHRKIGKEMD…LIEHTAGKFP (300 aa)) are catalytic. Residues Cys337, His388, and His518 each contribute to the Zn(2+) site.

Belongs to the class-II aminoacyl-tRNA synthetase family. As to quaternary structure, homodimer. It depends on Zn(2+) as a cofactor.

The protein resides in the cytoplasm. The catalysed reaction is tRNA(Thr) + L-threonine + ATP = L-threonyl-tRNA(Thr) + AMP + diphosphate + H(+). Its function is as follows. Catalyzes the attachment of threonine to tRNA(Thr) in a two-step reaction: L-threonine is first activated by ATP to form Thr-AMP and then transferred to the acceptor end of tRNA(Thr). Also edits incorrectly charged L-seryl-tRNA(Thr). In Phocaeicola vulgatus (strain ATCC 8482 / DSM 1447 / JCM 5826 / CCUG 4940 / NBRC 14291 / NCTC 11154) (Bacteroides vulgatus), this protein is Threonine--tRNA ligase.